Reading from the N-terminus, the 795-residue chain is ATP-dependent RNA helicase DHX15 (795 aa).

The segment at 1–108 (MSKRHRLDLG…HSTHAGHAGH (108 aa)) is disordered. Ser-15 carries the phosphoserine modification. The segment covering 20 to 62 (AGTDGKDRDRDRDREDRSKDRDRERDRGDREREREKEKEKELR) has biased composition (basic and acidic residues). A compositionally biased stretch (low complexity) spans 79 to 108 (ASHSAHSTHSAHSAHSTHSAHSTHAGHAGH). Residues 147 to 313 (TDILVRHQSF…FDNCPLLTIP (167 aa)) form the Helicase ATP-binding domain. Position 160 to 167 (160 to 167 (GETGSGKT)) interacts with ATP. Residues 260-263 (DEAH) carry the DEAH box motif. Residues 338–518 (TVIQIHMCEE…SVVLQLKKLG (181 aa)) enclose the Helicase C-terminal domain. Position 488 is an N6-acetyllysine (Lys-488). Lys-786 participates in a covalent cross-link: Glycyl lysine isopeptide (Lys-Gly) (interchain with G-Cter in SUMO2).

The protein belongs to the DEAD box helicase family. DEAH subfamily. DDX15/PRP43 sub-subfamily. Component of the U11/U12 snRNPs that are part of the U12-type spliceosome. Identified in the Intron Large spliceosome complex (IL, also named intron lariat spliceosome), a post-mRNA release spliceosomal complex containing the excised intron, U2, U5 and U6 snRNPs, and splicing factors; the association may be transient. The IL complex exists in two distinct conformations, one with the DHX15 (ILS2) and one without (ILS1). Interacts with TFIP11 (via G-patch domain); indicative for a recruitment to the IL complex. Interacts with SSB/La. Interacts with GPATCH2 (via G-patch domain); promoting the RNA helicase activity. Interacts with NKRF (via G-patch domain); promoting the RNA helicase activity. Interacts with NLRP6.

Its subcellular location is the nucleus. It is found in the nucleolus. The catalysed reaction is ATP + H2O = ADP + phosphate + H(+). ATPase activity is enhanced upon binding to G-patch domain-containing proteins. G-patch domain-containing proteins act like a brace that tethers mobile sections of DHX15 together, stabilizing a functional conformation with high RNA affinity, thereby promoting the ATPase activity. Its function is as follows. RNA helicase involved in mRNA processing and antiviral innate immunity. Pre-mRNA processing factor involved in disassembly of spliceosomes after the release of mature mRNA. In cooperation with TFIP11 seem to be involved in the transition of the U2, U5 and U6 snRNP-containing IL complex to the snRNP-free IS complex leading to efficient debranching and turnover of excised introns. Plays a key role in antiviral innate immunity by promoting both MAVS-dependent signaling and NLRP6 inflammasome. Acts as an RNA virus sensor: recognizes and binds viral double stranded RNA (dsRNA) and activates the MAVS-dependent signaling to produce interferon-beta and interferon lambda-3 (IFNL3). Involved in intestinal antiviral innate immunity together with NLRP6: recognizes and binds viral dsRNA and promotes activation of the NLRP6 inflammasome in intestinal epithelial cells to restrict infection by enteric viruses. The NLRP6 inflammasome acts by promoting maturation and secretion of IL18 in the extracellular milieu. Also involved in antibacterial innate immunity by promoting Wnt-induced antimicrobial protein expression in Paneth cells. This Pongo abelii (Sumatran orangutan) protein is ATP-dependent RNA helicase DHX15.